The sequence spans 390 residues: Oxysterol-binding protein 10 (390 aa).

This sequence belongs to the OSBP family.

The polypeptide is Oxysterol-binding protein 10 (osbJ) (Dictyostelium discoideum (Social amoeba)).